Here is a 660-residue protein sequence, read N- to C-terminus: Arginine--tRNA ligase, cytoplasmic (660 aa).

N-acetylmethionine is present on methionine 1. Residues 1 to 72 (MDGLVAQCSA…QAERKRPTKN (72 aa)) are could be involved in the assembly of the multisynthetase complex. L-arginine is bound by residues 200-202 (SPN), histidine 211, tyrosine 384, aspartate 388, and glutamine 412. A 'HIGH' region motif is present at residues 201–212 (PNIAKEMHVGHL). The segment at 529-543 (NTAAYLLYAFTRIRS) is interaction with tRNA.

Belongs to the class-I aminoacyl-tRNA synthetase family. Interacts (via N-terminus) with AIMP1 (via N-terminus); this stimulates its catalytic activity. Interacts (via N-terminus) with LARS2 (via C-terminus). Monomer. Part of a multisubunit complex that groups tRNA ligases for Arg (RARS1), Asp (DARS1), Gln (QARS1), Ile (IARS1), Leu (LARS1), Lys (KARS1), Met (MARS1) the bifunctional ligase for Glu and Pro (EPRS1) and the auxiliary subunits AIMP1/p43, AIMP2/p38 and EEF1E1/p18. Interacts with QARS1. Part of a complex composed of RARS1, QARS1 and AIMP1. In terms of tissue distribution, detected in dorsal root ganglion.

Its subcellular location is the cytoplasm. The protein resides in the cytosol. The enzyme catalyses tRNA(Arg) + L-arginine + ATP = L-arginyl-tRNA(Arg) + AMP + diphosphate. Functionally, forms part of a macromolecular complex that catalyzes the attachment of specific amino acids to cognate tRNAs during protein synthesis. Modulates the secretion of AIMP1 and may be involved in generation of the inflammatory cytokine EMAP2 from AIMP1. The protein is Arginine--tRNA ligase, cytoplasmic (Rars1) of Rattus norvegicus (Rat).